We begin with the raw amino-acid sequence, 530 residues long: Glucose-6-phosphate isomerase (530 aa).

The active-site Proton donor is the Glu-356. Active-site residues include His-387 and Lys-502.

Belongs to the GPI family.

The protein resides in the cytoplasm. It carries out the reaction alpha-D-glucose 6-phosphate = beta-D-fructose 6-phosphate. It participates in carbohydrate biosynthesis; gluconeogenesis. It functions in the pathway carbohydrate degradation; glycolysis; D-glyceraldehyde 3-phosphate and glycerone phosphate from D-glucose: step 2/4. In terms of biological role, catalyzes the reversible isomerization of glucose-6-phosphate to fructose-6-phosphate. This is Glucose-6-phosphate isomerase from Borrelia garinii subsp. bavariensis (strain ATCC BAA-2496 / DSM 23469 / PBi) (Borreliella bavariensis).